The primary structure comprises 310 residues: Transcription factor MYB53 (310 aa).

HTH myb-type domains lie at 9 to 61 and 62 to 116; these read ETGL…TNYL and RPDI…KKKL. DNA-binding regions (H-T-H motif) lie at residues 37–61 and 89–112; these read WSAL…TNYL and WSMI…NTHL.

Interacts with FBX5. In terms of tissue distribution, highly expressed in roots and at lower levels in leaves, stems and flowers.

It is found in the nucleus. Functionally, probable transcription factor. The sequence is that of Transcription factor MYB53 from Arabidopsis thaliana (Mouse-ear cress).